Consider the following 339-residue polypeptide: Transmembrane protein 120B (339 aa).

A coiled-coil region spans residues 1 to 77 (MSGQLERCER…ASREEAELVQ (77 aa)). The next 6 membrane-spanning stretches (helical) occupy residues 102–124 (GLYL…AKFA), 132–152 (FKLY…FFLH), 159–179 (VFNF…SILI), 187–207 (GWWV…LTWP), 270–290 (FLLP…VTLF), and 302–322 (QVFV…LTTL).

It belongs to the TMEM120 family. As to quaternary structure, heterooligomer with TMEM120A.

The protein localises to the nucleus inner membrane. In terms of biological role, necessary for efficient adipogenesis. Does not show ion channel activity. This chain is Transmembrane protein 120B (TMEM120B), found in Bos taurus (Bovine).